The following is a 658-amino-acid chain: DNA mismatch repair protein MutL (658 aa).

Residues 114 to 130 (RQEDSSHATQVKAEDGK) show a composition bias toward basic and acidic residues. 3 disordered regions span residues 114-137 (RQED…PTAA), 369-401 (DYPT…APQQ), and 438-457 (FGNM…LSDG).

It belongs to the DNA mismatch repair MutL/HexB family.

Its function is as follows. This protein is involved in the repair of mismatches in DNA. It is required for dam-dependent methyl-directed DNA mismatch repair. May act as a 'molecular matchmaker', a protein that promotes the formation of a stable complex between two or more DNA-binding proteins in an ATP-dependent manner without itself being part of a final effector complex. This chain is DNA mismatch repair protein MutL, found in Neisseria meningitidis serogroup A / serotype 4A (strain DSM 15465 / Z2491).